Here is a 293-residue protein sequence, read N- to C-terminus: Proteinase T (293 aa).

A propeptide spanning residues 1–12 (EFIEQDAVVTIS) is cleaved from the precursor. In terms of domain architecture, Peptidase S8 spans 19 to 293 (PWGLARISSQ…VLINNGEGSA (275 aa)). 2 disulfide bridges follow: cysteine 46–cysteine 137 and cysteine 192–cysteine 262. Active-site charge relay system residues include aspartate 51, histidine 83, and serine 238.

Belongs to the peptidase S8 family.

In terms of biological role, serine proteinase. This Parengyodontium album (Tritirachium album) protein is Proteinase T (PROT).